The chain runs to 94 residues: Trp operon repressor homolog (94 aa).

Residues 58-81 (QREIAEKYGVSIAQITRGSNALKG) mediate DNA binding.

This sequence belongs to the TrpR family. In terms of assembly, homodimer.

It localises to the cytoplasm. Its function is as follows. This protein is an aporepressor. When complexed with L-tryptophan it binds the operator region of the trp operon and prevents the initiation of transcription. The chain is Trp operon repressor homolog from Chlamydia trachomatis serovar A (strain ATCC VR-571B / DSM 19440 / HAR-13).